The sequence spans 113 residues: U11-theraphotoxin-Hhn1r (113 aa).

Residues 1–21 (MNTVRVTFLLVFVLAVSLGQA) form the signal peptide. Positions 22–74 (DKDENRMEMQEKTEQGKSYLDFAENLLLQKLEELEAKLLEEDSEESRNSRQKR) are excised as a propeptide. The interval 61-83 (EEDSEESRNSRQKRCIGEGVPCD) is disordered. Intrachain disulfides connect Cys-75–Cys-90, Cys-82–Cys-95, and Cys-89–Cys-110.

The protein belongs to the neurotoxin 14 (magi-1) family. 01 (HNTX-16) subfamily. Expressed by the venom gland.

The protein localises to the secreted. Functionally, probable ion channel inhibitor. This Cyriopagopus hainanus (Chinese bird spider) protein is U11-theraphotoxin-Hhn1r.